The sequence spans 335 residues: Anthranilate phosphoribosyltransferase (335 aa).

5-phospho-alpha-D-ribose 1-diphosphate-binding positions include G79, 82–83 (GD), T87, 89–92 (NIST), 107–115 (KHGSRSVSS), and S119. Residue G79 participates in anthranilate binding. Residue S91 coordinates Mg(2+). R165 serves as a coordination point for anthranilate. Positions 223 and 224 each coordinate Mg(2+).

This sequence belongs to the anthranilate phosphoribosyltransferase family. In terms of assembly, homodimer. Mg(2+) serves as cofactor.

It carries out the reaction N-(5-phospho-beta-D-ribosyl)anthranilate + diphosphate = 5-phospho-alpha-D-ribose 1-diphosphate + anthranilate. The protein operates within amino-acid biosynthesis; L-tryptophan biosynthesis; L-tryptophan from chorismate: step 2/5. Its function is as follows. Catalyzes the transfer of the phosphoribosyl group of 5-phosphorylribose-1-pyrophosphate (PRPP) to anthranilate to yield N-(5'-phosphoribosyl)-anthranilate (PRA). The sequence is that of Anthranilate phosphoribosyltransferase from Helicobacter pylori (strain G27).